Here is a 58-residue protein sequence, read N- to C-terminus: Lantibiotic macedovicin (58 aa).

Positions 1–25 are excised as a propeptide; it reads MMNATENQIFVETVSDQELEMLIGG. 2,3-didehydrobutyrine occurs at positions 33 and 35. 2 cross-links (beta-methyllanthionine (Thr-Cys)) span residues 33–38 and 35–57; these read TLTKDC and TKDC…CKNC. Cysteines 46 and 54 form a disulfide.

Post-translationally, maturation of macedovicin involves the enzymatic dehydration of Thr-33 and Thr-35 into dehydrobutyrine residues, that can form a beta-methyllanthionine bond with Cys-38 and Cys-57, respectively. This is followed by membrane translocation and cleavage of the modified precursor.

It localises to the secreted. Functionally, lanthionine-containing peptide antibiotic (lantibiotic) active on Gram-positive bacteria. Macedovicin inhibits a broad spectrum of lactic acid bacteria, several food spoilage species (e.g. Clostridium spp.) and oral streptococci. The bactericidal activity of lantibiotics is based on depolarization of energized bacterial cytoplasmic membranes, initiated by the formation of aqueous transmembrane pores. The chain is Lantibiotic macedovicin from Streptococcus macedonicus (strain ACA-DC 198).